We begin with the raw amino-acid sequence, 713 residues long: Undecaprenyl-diphosphooligosaccharide--protein glycotransferase (713 aa).

At 1 to 11 (MLKKEYLKNPY) the chain is on the cytoplasmic side. A helical membrane pass occupies residues 12–35 (LVLFAMIVLAYVFSVFCRFYWVWW). The Periplasmic segment spans residues 36–96 (ASEFNEYFFN…YWLYKITPFS (61 aa)). A DXD motif 1 motif is present at residues 52–54 (SND). Asp-54 is a Mn(2+) binding site. The chain crosses the membrane as a helical span at residues 97 to 122 (FESIILYMSTFLSSLVVIPIILLANE). Topologically, residues 123-125 (YKR) are cytoplasmic. The chain crosses the membrane as a helical span at residues 126–144 (PLMGFVAALLASVANSYYN). Topologically, residues 145-152 (RTMSGYYD) are periplasmic. A Mn(2+)-binding site is contributed by Asp-152. Residues 152–154 (DTD) carry the DXD motif 2 motif. Residues 153 to 174 (TDMLVIVLPMFILFFMVRMILK) form a helical membrane-spanning segment. The Cytoplasmic segment spans residues 175 to 176 (KD). The chain crosses the membrane as a helical span at residues 177–192 (FFSLIALPLFIGIYLW). At 193–197 (WYPSS) the chain is on the periplasmic side. Residue 194 to 196 (YPS) participates in [alpha-D-GalNAc-(1-&gt;4)]2-[beta-D-Glc-(1-&gt;3)]-[alpha-D-GalNAc-(1-&gt;4)]2-alpha-D-GalNAc-(1-&gt;3)-alpha-D-diNAcBac-tri-trans,hepta-cis-undecaprenyl diphosphate binding. Residues 198–215 (YTLNVALIGLFLIYTLIF) traverse the membrane as a helical segment. Over 216 to 220 (HRKEK) the chain is Cytoplasmic. Residues 221-233 (IFYIAVILSSLTL) traverse the membrane as a helical segment. The Periplasmic segment spans residues 234 to 237 (SNIA). The helical transmembrane segment at 238 to 254 (WFYQSAIIVILFALFAL) threads the bilayer. At 255-260 (EQKRLN) the chain is on the cytoplasmic side. A helical transmembrane segment spans residues 261–278 (FMIIGILGSATLIFLILS). Topologically, residues 279 to 324 (GGVDPILYQLKFYIFRSDESANLTQGFMYFNVNQTIQEVENVDFSE) are periplasmic. Tyr-291 provides a ligand contact to [alpha-D-GalNAc-(1-&gt;4)]2-[beta-D-Glc-(1-&gt;3)]-[alpha-D-GalNAc-(1-&gt;4)]2-alpha-D-GalNAc-(1-&gt;3)-alpha-D-diNAcBac-tri-trans,hepta-cis-undecaprenyl diphosphate. The short motif at 313 to 316 (TIQE) is the TIXE motif element. Residue Glu-316 participates in Mn(2+) binding. Residues 325–347 (FMRRISGSEIVFLFSLFGFVWLL) traverse the membrane as a helical segment. Over 348–352 (RKHKS) the chain is Cytoplasmic. A helical membrane pass occupies residues 353–369 (MIMALPILVLGFLALKG). Residues 370-373 (GLRF) are Periplasmic-facing. [alpha-D-GalNAc-(1-&gt;4)]2-[beta-D-Glc-(1-&gt;3)]-[alpha-D-GalNAc-(1-&gt;4)]2-alpha-D-GalNAc-(1-&gt;3)-alpha-D-diNAcBac-tri-trans,hepta-cis-undecaprenyl diphosphate is bound at residue Arg-372. A helical membrane pass occupies residues 374-396 (TIYSVPVMALGFGFLLSEFKAIL). At 397–406 (VKKYSQLTSN) the chain is on the cytoplasmic side. A helical membrane pass occupies residues 407–427 (VCIVFATILTLAPVFIHIYNY). Topologically, residues 428–713 (KAPTVFSQNE…RDAKVFKLKI (286 aa)) are periplasmic. The tract at residues 457-459 (WWD) is interacts with target acceptor peptide in protein substrate. A WWDYG motif motif is present at residues 457–461 (WWDYG). Tyr-462 contacts [alpha-D-GalNAc-(1-&gt;4)]2-[beta-D-Glc-(1-&gt;3)]-[alpha-D-GalNAc-(1-&gt;4)]2-alpha-D-GalNAc-(1-&gt;3)-alpha-D-diNAcBac-tri-trans,hepta-cis-undecaprenyl diphosphate. A glycan (N-linked (DATDGlc) asparagine) is linked at Asn-534. Positions 568–575 (MSLIFSTV) match the MI motif motif.

Belongs to the STT3 family. It depends on Mg(2+) as a cofactor. Mn(2+) serves as cofactor.

The protein resides in the cell inner membrane. The catalysed reaction is tritrans,heptacis-undecaprenyl diphosphooligosaccharide + [protein]-L-asparagine = tritrans,heptacis-undecaprenyl diphosphate + a glycoprotein with the oligosaccharide chain attached by N-beta-D-glycosyl linkage to protein L-asparagine.. It functions in the pathway protein modification; protein glycosylation. In terms of biological role, oligosaccharyl transferase (OST) that catalyzes the initial transfer of a defined glycan (GalNAc(2)GlcGalNAc(3)Bac(NAc)(2) in eubacteria, where Bac(NAc)(2) is di-N-acetyl bacillosamine) from the lipid carrier undecaprenol-pyrophosphate to an asparagine residue within an Asp/Glu-Asn-X-Ser/Thr consensus motif in nascent polypeptide chains, the first step in protein N-glycosylation. This is Undecaprenyl-diphosphooligosaccharide--protein glycotransferase (pglB) from Campylobacter jejuni subsp. jejuni serotype O:2 (strain ATCC 700819 / NCTC 11168).